Reading from the N-terminus, the 170-residue chain is Adenine phosphoribosyltransferase (170 aa).

Belongs to the purine/pyrimidine phosphoribosyltransferase family. As to quaternary structure, homodimer.

The protein localises to the cytoplasm. It carries out the reaction AMP + diphosphate = 5-phospho-alpha-D-ribose 1-diphosphate + adenine. It participates in purine metabolism; AMP biosynthesis via salvage pathway; AMP from adenine: step 1/1. Catalyzes a salvage reaction resulting in the formation of AMP, that is energically less costly than de novo synthesis. The sequence is that of Adenine phosphoribosyltransferase from Brevibacillus brevis (strain 47 / JCM 6285 / NBRC 100599).